A 131-amino-acid chain; its full sequence is Phosphoribosyl-AMP cyclohydrolase (131 aa).

Aspartate 82 provides a ligand contact to Mg(2+). Residue cysteine 83 participates in Zn(2+) binding. The Mg(2+) site is built by aspartate 84 and aspartate 86. 2 residues coordinate Zn(2+): cysteine 99 and cysteine 106.

Belongs to the PRA-CH family. In terms of assembly, homodimer. It depends on Mg(2+) as a cofactor. Zn(2+) serves as cofactor.

The protein resides in the cytoplasm. The enzyme catalyses 1-(5-phospho-beta-D-ribosyl)-5'-AMP + H2O = 1-(5-phospho-beta-D-ribosyl)-5-[(5-phospho-beta-D-ribosylamino)methylideneamino]imidazole-4-carboxamide. It functions in the pathway amino-acid biosynthesis; L-histidine biosynthesis; L-histidine from 5-phospho-alpha-D-ribose 1-diphosphate: step 3/9. Catalyzes the hydrolysis of the adenine ring of phosphoribosyl-AMP. The polypeptide is Phosphoribosyl-AMP cyclohydrolase (Methanospirillum hungatei JF-1 (strain ATCC 27890 / DSM 864 / NBRC 100397 / JF-1)).